A 153-amino-acid chain; its full sequence is Acylphosphatase-like protein MJ0553 (153 aa).

The region spanning 4–102 (TYELIIYGRV…SRLSSDDILE (99 aa)) is the Acylphosphatase-like domain.

The sequence is that of Acylphosphatase-like protein MJ0553 from Methanocaldococcus jannaschii (strain ATCC 43067 / DSM 2661 / JAL-1 / JCM 10045 / NBRC 100440) (Methanococcus jannaschii).